A 173-amino-acid chain; its full sequence is 6,7-dimethyl-8-ribityllumazine synthase (173 aa).

5-amino-6-(D-ribitylamino)uracil-binding positions include F24, 58-60 (ALE), and 82-84 (AVI). Residue 87 to 88 (ET) participates in (2S)-2-hydroxy-3-oxobutyl phosphate binding. H90 (proton donor) is an active-site residue. Residue N115 participates in 5-amino-6-(D-ribitylamino)uracil binding. Residue R129 coordinates (2S)-2-hydroxy-3-oxobutyl phosphate. Residues 150 to 173 (ALEPEEDDEDDEDEDFDDEEDDGR) form a disordered region. Residues 152-173 (EPEEDDEDDEDEDFDDEEDDGR) are compositionally biased toward acidic residues.

This sequence belongs to the DMRL synthase family.

The enzyme catalyses (2S)-2-hydroxy-3-oxobutyl phosphate + 5-amino-6-(D-ribitylamino)uracil = 6,7-dimethyl-8-(1-D-ribityl)lumazine + phosphate + 2 H2O + H(+). It participates in cofactor biosynthesis; riboflavin biosynthesis; riboflavin from 2-hydroxy-3-oxobutyl phosphate and 5-amino-6-(D-ribitylamino)uracil: step 1/2. Functionally, catalyzes the formation of 6,7-dimethyl-8-ribityllumazine by condensation of 5-amino-6-(D-ribitylamino)uracil with 3,4-dihydroxy-2-butanone 4-phosphate. This is the penultimate step in the biosynthesis of riboflavin. This chain is 6,7-dimethyl-8-ribityllumazine synthase, found in Bordetella pertussis (strain Tohama I / ATCC BAA-589 / NCTC 13251).